The sequence spans 202 residues: Small ribosomal subunit protein uS4c (202 aa).

The 63-residue stretch at 90–152 (MRLDNLIFRL…AASKSLVNTY (63 aa)) folds into the S4 RNA-binding domain.

It belongs to the universal ribosomal protein uS4 family. In terms of assembly, part of the 30S ribosomal subunit. Contacts protein S5. The interaction surface between S4 and S5 is involved in control of translational fidelity.

It is found in the plastid. Its subcellular location is the chloroplast. In terms of biological role, one of the primary rRNA binding proteins, it binds directly to 16S rRNA where it nucleates assembly of the body of the 30S subunit. Functionally, with S5 and S12 plays an important role in translational accuracy. The polypeptide is Small ribosomal subunit protein uS4c (rps4) (Emiliania huxleyi (Coccolithophore)).